The sequence spans 147 residues: Ubiquitin-like-conjugating enzyme ATG10 (147 aa).

C116 functions as the Glycyl thioester intermediate in the catalytic mechanism.

The protein belongs to the ATG10 family. Forms homooligomers. Interacts with ATG10. Interacts with ATG7 and ATG12.

The protein localises to the preautophagosomal structure membrane. Its function is as follows. E2-like enzyme required for the cytoplasm to vacuole transport (Cvt), autophagy and nucleophagy. Acts as an E2-like enzyme that catalyzes the conjugation of ATG12 to ATG5. ATG12 conjugation to ATG5 is required for proper localization of ATG8 to the preautophagosomal structure (PAS). Likely serves as an ATG5-recognition molecule. In Kluyveromyces marxianus (strain DMKU3-1042 / BCC 29191 / NBRC 104275) (Yeast), this protein is Ubiquitin-like-conjugating enzyme ATG10.